Consider the following 394-residue polypeptide: Acetate kinase (394 aa).

Residue N10 participates in Mg(2+) binding. Position 17 (K17) interacts with ATP. R87 lines the substrate pocket. The active-site Proton donor/acceptor is the D144. ATP is bound by residues 204-208, 279-281, and 327-331; these read HLGNG, DMR, and GIGEN. E381 lines the Mg(2+) pocket.

It belongs to the acetokinase family. As to quaternary structure, homodimer. The cofactor is Mg(2+). Mn(2+) is required as a cofactor.

It localises to the cytoplasm. It carries out the reaction acetate + ATP = acetyl phosphate + ADP. The protein operates within metabolic intermediate biosynthesis; acetyl-CoA biosynthesis; acetyl-CoA from acetate: step 1/2. Catalyzes the formation of acetyl phosphate from acetate and ATP. Can also catalyze the reverse reaction. The chain is Acetate kinase from Ectopseudomonas mendocina (strain ymp) (Pseudomonas mendocina).